The chain runs to 99 residues: Small ribosomal subunit protein bS20 (99 aa).

It belongs to the bacterial ribosomal protein bS20 family.

Functionally, binds directly to 16S ribosomal RNA. This Cyanothece sp. (strain PCC 7425 / ATCC 29141) protein is Small ribosomal subunit protein bS20.